The following is a 397-amino-acid chain: Elongation factor Tu (397 aa).

In terms of domain architecture, tr-type G spans 10–207 (KPHVNIGTIG…AVDTYIEEPK (198 aa)). Residues 19–26 (GHVDHGKT) form a G1 region. 19-26 (GHVDHGKT) contributes to the GTP binding site. Mg(2+) is bound at residue Thr26. Residues 60–64 (GITIN) are G2. The interval 81-84 (DCPG) is G3. GTP contacts are provided by residues 81-85 (DCPGH) and 136-139 (NKID). The segment at 136–139 (NKID) is G4. The interval 177–179 (SAL) is G5.

The protein belongs to the TRAFAC class translation factor GTPase superfamily. Classic translation factor GTPase family. EF-Tu/EF-1A subfamily. As to quaternary structure, monomer.

The protein resides in the cytoplasm. It carries out the reaction GTP + H2O = GDP + phosphate + H(+). GTP hydrolase that promotes the GTP-dependent binding of aminoacyl-tRNA to the A-site of ribosomes during protein biosynthesis. This chain is Elongation factor Tu, found in Metamycoplasma hominis (strain ATCC 23114 / DSM 25592 / NBRC 14850 / NCTC 10111 / PG21) (Mycoplasma hominis).